The chain runs to 288 residues: Shikimate dehydrogenase (NADP(+)) (288 aa).

Shikimate contacts are provided by residues 21-23 and Thr-68; that span reads SLS. Lys-72 functions as the Proton acceptor in the catalytic mechanism. Glu-84 is an NADP(+) binding site. Residues Asn-93 and Asp-108 each coordinate shikimate. Residues 132–136 and Leu-230 each bind NADP(+); that span reads GNGGA. Tyr-232 is a binding site for shikimate. Gly-253 is a binding site for NADP(+).

Belongs to the shikimate dehydrogenase family. In terms of assembly, homodimer.

It catalyses the reaction shikimate + NADP(+) = 3-dehydroshikimate + NADPH + H(+). The protein operates within metabolic intermediate biosynthesis; chorismate biosynthesis; chorismate from D-erythrose 4-phosphate and phosphoenolpyruvate: step 4/7. Involved in the biosynthesis of the chorismate, which leads to the biosynthesis of aromatic amino acids. Catalyzes the reversible NADPH linked reduction of 3-dehydroshikimate (DHSA) to yield shikimate (SA). This chain is Shikimate dehydrogenase (NADP(+)), found in Gloeothece citriformis (strain PCC 7424) (Cyanothece sp. (strain PCC 7424)).